Here is a 768-residue protein sequence, read N- to C-terminus: Ribosomal RNA large subunit methyltransferase K/L (768 aa).

The THUMP domain occupies 60 to 175 (DLYKICLWSR…DKQAELYLDL (116 aa)).

It belongs to the methyltransferase superfamily. RlmKL family.

Its subcellular location is the cytoplasm. The catalysed reaction is guanosine(2445) in 23S rRNA + S-adenosyl-L-methionine = N(2)-methylguanosine(2445) in 23S rRNA + S-adenosyl-L-homocysteine + H(+). It carries out the reaction guanosine(2069) in 23S rRNA + S-adenosyl-L-methionine = N(2)-methylguanosine(2069) in 23S rRNA + S-adenosyl-L-homocysteine + H(+). In terms of biological role, specifically methylates the guanine in position 2445 (m2G2445) and the guanine in position 2069 (m7G2069) of 23S rRNA. The sequence is that of Ribosomal RNA large subunit methyltransferase K/L from Psychrobacter arcticus (strain DSM 17307 / VKM B-2377 / 273-4).